Consider the following 553-residue polypeptide: Arginine--tRNA ligase (553 aa).

The 'HIGH' region signature appears at 130-140 (ANPTGDLHIGH).

Belongs to the class-I aminoacyl-tRNA synthetase family. In terms of assembly, monomer.

Its subcellular location is the cytoplasm. It carries out the reaction tRNA(Arg) + L-arginine + ATP = L-arginyl-tRNA(Arg) + AMP + diphosphate. The protein is Arginine--tRNA ligase of Staphylococcus aureus (strain MRSA252).